Consider the following 891-residue polypeptide: DNA mismatch repair protein MutS (891 aa).

Residue 634-641 (GPNMGGKS) coordinates ATP.

The protein belongs to the DNA mismatch repair MutS family.

This protein is involved in the repair of mismatches in DNA. It is possible that it carries out the mismatch recognition step. This protein has a weak ATPase activity. In Burkholderia pseudomallei (strain 1106a), this protein is DNA mismatch repair protein MutS.